The chain runs to 148 residues: Putative nickel-responsive regulator (148 aa).

4 residues coordinate Ni(2+): H88, H99, H101, and C107.

Belongs to the transcriptional regulatory CopG/NikR family. As to quaternary structure, homotetramer. The cofactor is Ni(2+).

Its function is as follows. Transcriptional regulator. In Helicobacter pylori (strain ATCC 700392 / 26695) (Campylobacter pylori), this protein is Putative nickel-responsive regulator.